We begin with the raw amino-acid sequence, 886 residues long: Cytosolic carboxypeptidase-like protein 5 (886 aa).

In terms of domain architecture, Peptidase M14 spans 157–570 (YPFSYSDCQE…AMAIAALDMA (414 aa)). The Zn(2+) site is built by H252 and E255. Residues 344-354 (SQSSSEHQPSS) are compositionally biased toward low complexity. Positions 344–364 (SQSSSEHQPSSCLPPDAPVSD) are disordered. Zn(2+) is bound at residue H434. E516 serves as the catalytic Proton donor/acceptor. Disordered stretches follow at residues 605–734 (STLN…SSHK) and 784–848 (LQAR…FSPI). The segment covering 631-640 (CSENTLSRAR) has biased composition (polar residues). A compositionally biased stretch (low complexity) spans 641–666 (SFSTGTSAGGSSSSQQNSPQMKNSPS). Residues 696 to 705 (REPRSQDRRR) show a composition bias toward basic and acidic residues. The segment covering 714 to 732 (PAGSLAPSPAPTSSGPASS) has biased composition (low complexity). The residue at position 841 (S841) is a Phosphoserine.

This sequence belongs to the peptidase M14 family. Zn(2+) serves as cofactor. As to expression, expressed in brain.

The protein resides in the cytoplasm. It localises to the cytosol. Its subcellular location is the nucleus. The protein localises to the cytoskeleton. It is found in the spindle. The protein resides in the midbody. The catalysed reaction is gamma-L-glutamyl-L-glutamyl-[protein] + H2O = L-glutamyl-[protein] + L-glutamate. The enzyme catalyses (L-glutamyl)(n+1)-gamma-L-glutamyl-L-glutamyl-[protein] + H2O = (L-glutamyl)(n)-gamma-L-glutamyl-L-glutamyl-[protein] + L-glutamate. It carries out the reaction C-terminal L-alpha-aminoacyl-L-glutamyl-[tubulin] + H2O = C-terminal L-alpha-aminoacyl-[tubulin] + L-glutamate. It catalyses the reaction C-terminal L-alpha-aminoacyl-L-glutamyl-L-glutamyl-[tubulin] + H2O = C-terminal L-alpha-aminoacyl-L-glutamyl-[tubulin] + L-glutamate. Its function is as follows. Metallocarboxypeptidase that mediates deglutamylation of tubulin and non-tubulin target proteins. Catalyzes the removal of polyglutamate side chains present on the gamma-carboxyl group of glutamate residues within the C-terminal tail of alpha- and beta-tubulin. Cleaves alpha- and gamma-linked polyglutamate tubulin side-chain, as well as the branching point glutamate. Also catalyzes the removal of alpha-linked glutamate residues from the carboxy-terminus of alpha-tubulin. Mediates deglutamylation of nucleotidyltransferase CGAS, leading to CGAS antiviral defense response activation. The polypeptide is Cytosolic carboxypeptidase-like protein 5 (Homo sapiens (Human)).